We begin with the raw amino-acid sequence, 281 residues long: Transmembrane protein 41A-A (281 aa).

The first 22 residues, methionine 1–serine 22, serve as a signal peptide directing secretion. The segment at histidine 32–serine 56 is disordered. Residues glutamine 34 to aspartate 47 are compositionally biased toward basic and acidic residues. The next 5 helical transmembrane spans lie at glycine 84–glycine 104, phenylalanine 107–valine 127, leucine 170–methionine 190, isoleucine 197–cysteine 217, and tryptophan 236–isoleucine 256.

The protein belongs to the TMEM41 family.

Its subcellular location is the membrane. In Danio rerio (Zebrafish), this protein is Transmembrane protein 41A-A (tmem41aa).